A 434-amino-acid chain; its full sequence is N-acylneuraminate cytidylyltransferase (434 aa).

Met1 carries the N-acetylmethionine modification. Residues 1 to 42 (MDSVEKGAATSVSNPRGRPSRGRPPKLQRNSRGGQGRGVEKP) form a disordered region. A BC1 motif motif is present at residues 15–31 (PRGRPSRGRPPKLQRNS). Arg37 and Arg52 each carry omega-N-methylarginine. Residues Arg52, Asn62, Arg111, Ser120, Ser122, and Gln143 each contribute to the substrate site. The BC2 motif motif lies at 200–206 (KRPRRQD). The active site involves Arg201. The short motif at 269 to 276 (KEKLKEIK) is the BC3 motif element.

This sequence belongs to the CMP-NeuNAc synthase family. In terms of assembly, homotetramer; the active enzyme is formed by a dimer of dimers. As to expression, ubiquitously expressed. Expressed in pancreas, kidney, liver, skeletal muscle, lung, placenta, brain, heart, colon, PBL, small intestine, ovary, testis, prostate, thymus and spleen.

It is found in the nucleus. It carries out the reaction an N-acylneuraminate + CTP = a CMP-N-acyl-beta-neuraminate + diphosphate. It functions in the pathway amino-sugar metabolism; N-acetylneuraminate metabolism. In terms of biological role, catalyzes the activation of N-acetylneuraminic acid (NeuNAc) to cytidine 5'-monophosphate N-acetylneuraminic acid (CMP-NeuNAc), a substrate required for the addition of sialic acid. Has some activity toward NeuNAc, N-glycolylneuraminic acid (Neu5Gc) or 2-keto-3-deoxy-D-glycero-D-galacto-nononic acid (KDN). The polypeptide is N-acylneuraminate cytidylyltransferase (CMAS) (Homo sapiens (Human)).